Reading from the N-terminus, the 84-residue chain is uncharacterized protein (84 aa).

Positions 1-14 are enriched in low complexity; sequence MQKLNKSSSKGKNN. Residues 1–84 form a disordered region; it reads MQKLNKSSSK…VDKGERKESE (84 aa). A compositionally biased stretch (gly residues) spans 28–40; sequence STYGFGPYGGGGF. Basic and acidic residues-rich tracts occupy residues 53 to 65 and 73 to 84; these read DTKK…EEGT and KLVDKGERKESE.

This is an uncharacterized protein from Schizosaccharomyces pombe (strain 972 / ATCC 24843) (Fission yeast).